Reading from the N-terminus, the 637-residue chain is Chaperone protein DnaK (637 aa).

Thr196 is subject to Phosphothreonine; by autocatalysis. Disordered stretches follow at residues 484–528 and 598–637; these read KATG…EVDT and TEAG…VDDK. The segment covering 501–528 has biased composition (basic and acidic residues); the sequence is SETEIEKMKKDASSHADEDKKKKEEVDT. Residues 600–620 are compositionally biased toward low complexity; it reads AGAPGAAGAAGAAGQGQSASS. Over residues 621–637 the composition is skewed to basic and acidic residues; the sequence is GKDDEVKNADFEVVDDK.

This sequence belongs to the heat shock protein 70 family.

Acts as a chaperone. This is Chaperone protein DnaK from Chloroherpeton thalassium (strain ATCC 35110 / GB-78).